Consider the following 353-residue polypeptide: Phosphate acyltransferase (353 aa).

This sequence belongs to the PlsX family. In terms of assembly, homodimer. Probably interacts with PlsY.

Its subcellular location is the cytoplasm. It catalyses the reaction a fatty acyl-[ACP] + phosphate = an acyl phosphate + holo-[ACP]. It participates in lipid metabolism; phospholipid metabolism. Its function is as follows. Catalyzes the reversible formation of acyl-phosphate (acyl-PO(4)) from acyl-[acyl-carrier-protein] (acyl-ACP). This enzyme utilizes acyl-ACP as fatty acyl donor, but not acyl-CoA. The sequence is that of Phosphate acyltransferase from Nitrosospira multiformis (strain ATCC 25196 / NCIMB 11849 / C 71).